A 208-amino-acid chain; its full sequence is UPF0637 protein BCQ_3749 (208 aa).

This sequence belongs to the UPF0637 family.

In Bacillus cereus (strain Q1), this protein is UPF0637 protein BCQ_3749.